Consider the following 89-residue polypeptide: Large ribosomal subunit protein bL27 (89 aa).

The segment at 1 to 24 is disordered; it reads MAHKKGTGSTRNGRDSRSQRLGVK.

Belongs to the bacterial ribosomal protein bL27 family.

The protein is Large ribosomal subunit protein bL27 of Microcystis aeruginosa (strain NIES-843 / IAM M-2473).